We begin with the raw amino-acid sequence, 882 residues long: Cadherin-1 (882 aa).

The signal sequence occupies residues 1–22 (MGPWSRSLSALLLLLQVSSWLC). Residues 23-154 (QEPEPCHPGF…SSSGLRRRKR (132 aa)) constitute a propeptide that is removed on maturation. A glycan (N-linked (GlcNAc...) asparagine) is linked at asparagine 144. Cadherin domains lie at 155-262 (DWVI…KPEF), 263-375 (TQEV…PPVF), 376-486 (NPTT…APIF), 487-593 (VPPE…DNAP), and 594-697 (IPEP…VCKK). Residues 155–709 (DWVIPPISCP…PIEAGLQIPA (555 aa)) are Extracellular-facing. Aspartate 257 lines the Ca(2+) pocket. Serine 280 carries an O-linked (Man...) serine glycan. An O-linked (Man...) threonine glycan is attached at threonine 285. Aspartate 288 is a Ca(2+) binding site. Threonine 358, threonine 470, threonine 472, and threonine 509 each carry an O-linked (Man...) threonine glycan. A glycan (N-linked (GlcNAc...) asparagine) is linked at asparagine 558. Threonine 576, threonine 578, and threonine 580 each carry an O-linked (Man...) threonine glycan. N-linked (GlcNAc...) asparagine glycosylation is present at asparagine 637. The chain crosses the membrane as a helical span at residues 710 to 730 (ILGILGGILALLILILLLLLF). Over 731–882 (LRRRAVVKEP…ADMYGGGEDD (152 aa)) the chain is Cytoplasmic. The interval 747 to 767 (DTRDNVYYYDEEGGGEEDQDF) is disordered. A phosphotyrosine; by SRC mark is found at tyrosine 753, tyrosine 754, and tyrosine 755. Acidic residues predominate over residues 755–767 (YDEEGGGEEDQDF). The required for binding CTNND1 and PSEN1 stretch occupies residues 758 to 769 (EGGGEEDQDFDL). Residues serine 770, serine 793, serine 838, serine 840, and serine 846 each carry the phosphoserine modification. Residues 811–882 (IDENLKAADT…ADMYGGGEDD (72 aa)) are required for binding alpha, beta and gamma catenins.

Homodimer; disulfide-linked. Component of an E-cadherin/ catenin adhesion complex composed of at least E-cadherin/CDH1, beta-catenin/CTNNB1 or gamma-catenin/JUP, and potentially alpha-catenin/CTNNA1; the complex is located to adherens junctions. Found in a complex composed of CDH1, RAP1A and PKP3; PKP3 acts as a scaffold protein within the complex, the complex is required for CDH1 localization to mature desmosome cell junctions. Interacts with the TRPV4 and CTNNB1 complex. Interacts with CTNND1. The stable association of CTNNA1 is controversial as CTNNA1 was shown not to bind to F-actin when assembled in the complex. Alternatively, the CTNNA1-containing complex may be linked to F-actin by other proteins such as LIMA1. Interaction with PSEN1, cleaves CDH1 resulting in the disassociation of cadherin-based adherens junctions (CAJs). Interacts with AJAP1 and DLGAP5. Interacts with TBC1D2. Interacts with LIMA1. Interacts with CAV1. Interacts with PIP5K1C. Interacts with RAB8B. Interacts with DDR1; this stabilizes CDH1 at the cell surface and inhibits its internalization. Interacts with RAPGEF2. Interacts with KLRG1. Forms a ternary complex composed of ADAM10, CADH1 and EPHA4; within the complex, CADH1 is cleaved by ADAM10 which disrupts adherens junctions. Interacts with SPEF1. Interacts with CTNNB1 and PKP2. Interacts with AMOTL2; the interaction may facilitate binding of radial actin fibers to cell junction complexes. Interacts with DSG3; the interaction is required for CDH1 localization to developing adherens junctions. In terms of processing, during apoptosis or with calcium influx, cleaved by a membrane-bound metalloproteinase (ADAM10), PS1/gamma-secretase and caspase-3. Processing by the metalloproteinase, induced by calcium influx, causes disruption of cell-cell adhesion and the subsequent release of beta-catenin into the cytoplasm. The residual membrane-tethered cleavage product is rapidly degraded via an intracellular proteolytic pathway. Cleavage by caspase-3 releases the cytoplasmic tail resulting in disintegration of the actin microfilament system. The gamma-secretase-mediated cleavage promotes disassembly of adherens junctions. During development of the cochlear organ of Corti, cleavage by ADAM10 at adherens junctions promotes pillar cell separation. Post-translationally, N-glycosylation at Asn-637 is essential for expression, folding and trafficking. Addition of bisecting N-acetylglucosamine by MGAT3 modulates its cell membrane location. Ubiquitinated by a SCF complex containing SKP2, which requires prior phosphorylation by CK1/CSNK1A1. Ubiquitinated by CBLL1/HAKAI, requires prior phosphorylation at Tyr-754. In terms of processing, O-glycosylated. O-manosylated by TMTC1, TMTC2, TMTC3 or TMTC4. Thr-285 and Thr-509 are O-mannosylated by TMTC2 or TMTC4 but not TMTC1 or TMTC3.

It localises to the cell junction. The protein localises to the adherens junction. Its subcellular location is the cell membrane. The protein resides in the endosome. It is found in the golgi apparatus. It localises to the trans-Golgi network. The protein localises to the cytoplasm. Its subcellular location is the desmosome. Its function is as follows. Cadherins are calcium-dependent cell adhesion proteins. They preferentially interact with themselves in a homophilic manner in connecting cells; cadherins may thus contribute to the sorting of heterogeneous cell types. CDH1 is involved in mechanisms regulating cell-cell adhesions, mobility and proliferation of epithelial cells. Promotes organization of radial actin fiber structure and cellular response to contractile forces, via its interaction with AMOTL2 which facilitates anchoring of radial actin fibers to CDH1 junction complexes at the cell membrane. Plays a role in the early stages of desmosome cell-cell junction formation via facilitating the recruitment of DSG2 and DSP to desmosome plaques. Has a potent invasive suppressor role. It is a ligand for integrin alpha-E/beta-7. E-Cad/CTF2 promotes non-amyloidogenic degradation of Abeta precursors. Has a strong inhibitory effect on APP C99 and C83 production. The protein is Cadherin-1 (CDH1) of Pongo abelii (Sumatran orangutan).